We begin with the raw amino-acid sequence, 648 residues long: Leucine-rich repeat transmembrane protein FLRT3 (648 aa).

Residues 1-28 (MSTETWNLFVAWAQLLLLFRISPQYVNA) form the signal peptide. Residues 29 to 527 (KPCPSVCRCD…KEPYKNSSLP (499 aa)) are Extracellular-facing. The 33-residue stretch at 30-62 (PCPSVCRCDGGFIYCNDRDLTSIPSGIPDDATT) folds into the LRRNT domain. 2 cysteine pairs are disulfide-bonded: Cys31-Cys37 and Cys35-Cys44. LRR repeat units lie at residues 58–82 (DDATTLYLQNNQINNAGIPSDLRGL), 83–105 (DKVERIYLYRNSLDEFPINLPKN), 107–126 (KELHLQENNIRTITYDALSQ), 127–152 (IPSIEELHLDDNSVSAVSIEDGAFRD), 154–179 (IFLRLLFLSRNHLSTIPWGLPRTIEE), 181–197 (RLDDNRISTIAEISLQD), 198–223 (LTNLKRLVLDGNLLNNNGLGERVFMN), 225–246 (INLTELSLVRNSLTSPPANLPG), 247–269 (TNLRKLYLQENHMNYVPPNAFAD), and 270–293 (LTQLYRLDMSNNNITALPQGIFDD). N-linked (GlcNAc...) asparagine glycosylation is present at Asn226. The LRRCT domain maps to 305–356 (NPWYCGCKMKWVRDWLQSLPSKVNVRGLMCQAPERVRGMTIKDLNKELFDCK). The cysteines at positions 309 and 334 are disulfide-linked. Positions 409–503 (KIITIQVKSI…VCIETETAPL (95 aa)) constitute a Fibronectin type-III domain. The chain crosses the membrane as a helical span at residues 528–548 (LAAIIGGAVALVAITLLALVC). The Cytoplasmic portion of the chain corresponds to 549-648 (WYVHRNGSLF…GIPDSDHSHS (100 aa)). The segment covering 624-633 (NSHSESSSNR) has biased composition (low complexity). The tract at residues 624–648 (NSHSESSSNRSYRDSGIPDSDHSHS) is disordered.

In terms of assembly, interacts with fgfr1 and fgfr4. Interacts with rnd1, cdh1 and pcdh8. Interacts (via extracellular domain) with unc5b and unc5d (via extracellular domain). N-glycosylated. Post-translationally, proteolytic cleavage in the juxtamembrane region gives rise to a soluble ectodomain. Cleavage is probably effected by a metalloprotease.

It is found in the cell membrane. Its subcellular location is the endoplasmic reticulum membrane. It localises to the cell junction. The protein resides in the focal adhesion. The protein localises to the secreted. It is found in the cell projection. Its subcellular location is the axon. It localises to the growth cone membrane. Functionally, functions in cell-cell adhesion, cell migration and axon guidance, exerting an attractive or repulsive role depending on its interaction partners. Modulates cadherin-dependent cell-cell adhesion and cell sorting. Plays a role in the spatial organization of brain neurons. Plays a role in vascular development. Plays a role in cell-cell adhesion via its interaction with latrophilins that are expressed at the surface of adjacent cells. Mediates axon attraction towards cells expressing ntn1. mediates axon growth cone collapse and plays a repulsive role in neuron guidance via its interaction with unc-5 family members. Plays a role in the regulation of the density of glutamaergic synapses. Plays a role in signaling cascades downstream of fgfr1, and possibly also other fgfr family members. Plays a role in embryonic morphogenesis, but not in embryonic patterning. The protein is Leucine-rich repeat transmembrane protein FLRT3 of Xenopus tropicalis (Western clawed frog).